Here is a 432-residue protein sequence, read N- to C-terminus: Fibroleukin (432 aa).

The N-terminal stretch at 1 to 19 is a signal peptide; the sequence is MRLPGWLWLSSAVLAACRA. N-linked (GlcNAc...) asparagine glycosylation is present at N24. The stretch at 71 to 157 forms a coiled coil; that stretch reads GSMEEVLKEV…QGRLETLHLV (87 aa). The tract at residues 100 to 122 is disordered; it reads QADDHRDPGGNGGNGAETAEDSR. N-linked (GlcNAc...) asparagine glycans are attached at residues N172, N228, N256, and N329. The Fibrinogen C-terminal domain maps to 197-429; the sequence is PVQHLIYKDC…QAKMMIRPKN (233 aa). An intrachain disulfide couples C206 to C235. C364 and C377 are disulfide-bonded.

In terms of assembly, homotetramer; disulfide-linked. As to expression, constitutively expressed in cytotoxic T-cells.

The protein resides in the secreted. In terms of biological role, converts prothrombin to thrombin. The chain is Fibroleukin (Fgl2) from Mus musculus (Mouse).